The chain runs to 456 residues: uncharacterized protein (456 aa).

Positions 3 to 61 (TIKKNEVKTGKVIDLTHEGHGVVKVDRYPIFIPNALIDEEIKFKLIKVKKNFAIGKLIE) constitute a TRAM domain. [4Fe-4S] cluster is bound by residues Cys74, Cys80, Cys83, and Cys162. Gln286, Tyr315, Glu336, and Asp384 together coordinate S-adenosyl-L-methionine. Cys411 acts as the Nucleophile in catalysis.

This sequence belongs to the class I-like SAM-binding methyltransferase superfamily. RNA M5U methyltransferase family.

This is an uncharacterized protein from Staphylococcus epidermidis (strain ATCC 12228 / FDA PCI 1200).